The sequence spans 448 residues: Protein TraN (448 aa).

Disordered stretches follow at residues 243-273 and 411-448; these read NRVG…NSGE and EAAR…NKPS. A compositionally biased stretch (low complexity) spans 246 to 261; sequence GASRTATTARAGQQQS. The segment covering 262–271 has biased composition (polar residues); the sequence is PAVKQSSGNS. Positions 421-437 are enriched in basic and acidic residues; that stretch reads RKQEQEKKQAQERERGR. Polar residues predominate over residues 438-448; that stretch reads SQSLGLSNKPS.

It to H.influenzae HI_1407.

The protein is Protein TraN (traN) of Escherichia coli.